A 719-amino-acid chain; its full sequence is Protein psiI (719 aa).

The first 19 residues, 1 to 19 (MKIIFNLLILFSLVNFINS), serve as a signal peptide directing secretion. Residues 20 to 658 (QSTTQATTLK…ICQTGAIVST (639 aa)) are Extracellular-facing. N-linked (GlcNAc...) asparagine glycosylation is found at Asn62, Asn105, Asn118, Asn151, Asn315, Asn379, Asn454, Asn488, Asn500, Asn538, Asn592, and Asn629. Residues 119-261 (LTLNPSTGTY…YDYCGVCYGD (143 aa)) enclose the PA14 domain. A helical transmembrane segment spans residues 659-679 (AVVASVVVVGAVVLGAAIFAG). Residues 680–719 (KKGYDHWKANQGQVFASSNANPLYQQSNNGGENALFEAPQ) lie on the Cytoplasmic side of the membrane.

This sequence belongs to the prespore-cell-inducing factor family.

It localises to the membrane. This is Protein psiI (psiI) from Dictyostelium discoideum (Social amoeba).